Here is a 75-residue protein sequence, read N- to C-terminus: MVDVSQHELVPEHTVLDEETLDGVLADYDIDRTELPKIKYKDPALPDNAEIGDVVEIVRDSRTTDEAVVYRLVIE.

Belongs to the archaeal Rpo5/eukaryotic RPB5 RNA polymerase subunit family. As to quaternary structure, part of the RNA polymerase complex.

It is found in the cytoplasm. It catalyses the reaction RNA(n) + a ribonucleoside 5'-triphosphate = RNA(n+1) + diphosphate. In terms of biological role, DNA-dependent RNA polymerase (RNAP) catalyzes the transcription of DNA into RNA using the four ribonucleoside triphosphates as substrates. The protein is DNA-directed RNA polymerase subunit Rpo5 of Halobacterium salinarum (strain ATCC 700922 / JCM 11081 / NRC-1) (Halobacterium halobium).